The primary structure comprises 412 residues: Angiopoietin-related protein 4 (412 aa).

A signal peptide spans 1–23 (MRSAPTARAALVLCAATAGLLSA). A coiled-coil region spans residues 106 to 153 (ETLHSLQTQLKAQNSKIQQLFQKVAQQQRHLEKQHLRIQNLQGQLDHL). N183 carries N-linked (GlcNAc...) asparagine glycosylation. One can recognise a Fibrinogen C-terminal domain in the interval 185 to 407 (SRLHRLPRDC…ATTMLIQPTV (223 aa)). Cystine bridges form between C194/C222 and C347/C360.

Homooligomer; disulfide-linked via Cys residues in the N-terminal part of the protein. The homooligomer undergoes proteolytic processing to release the ANGPTL4 C-terminal chain, which circulates as a monomer. The homooligomer unprocessed form is able to interact with the extracellular matrix. N-glycosylated. In terms of processing, forms disulfide-linked dimers and tetramers. Post-translationally, cleaved into a smaller N-terminal chain and a larger chain that contains the fibrinogen C-terminal domain; both cleaved and uncleaved forms are detected in the extracellular space. The cleaved form is not present within the cell.

It localises to the secreted. The protein resides in the extracellular space. It is found in the extracellular matrix. Mediates inactivation of the lipoprotein lipase LPL, and thereby plays a role in the regulation of triglyceride clearance from the blood serum and in lipid metabolism. May also play a role in regulating glucose homeostasis and insulin sensitivity. Inhibits proliferation, migration, and tubule formation of endothelial cells and reduces vascular leakage. Upon heterologous expression, inhibits the adhesion of endothelial cell to the extracellular matrix (ECM), and inhibits the reorganization of the actin cytoskeleton, formation of actin stress fibers and focal adhesions in endothelial cells that have adhered to ANGPTL4-containing ECM (in vitro). Depending on context, may modulate tumor-related angiogenesis. Functionally, mediates inactivation of the lipoprotein lipase LPL, and thereby plays an important role in the regulation of triglyceride clearance from the blood serum and in lipid metabolism. Has higher activity in LPL inactivation than the uncleaved protein. In Sus scrofa (Pig), this protein is Angiopoietin-related protein 4 (ANGPTL4).